A 321-amino-acid chain; its full sequence is Glucan 1,3-beta-glucosidase (321 aa).

An N-terminal signal peptide occupies residues 1 to 21 (MQFLSSFVFAALALLPLSAMA). N-linked (GlcNAc...) asparagine glycans are attached at residues N39 and N99. E141 serves as the catalytic Proton donor. N-linked (GlcNAc...) asparagine glycosylation is found at N210, N213, and N237. E244 serves as the catalytic Nucleophile. 2 N-linked (GlcNAc...) asparagine glycosylation sites follow: N309 and N317.

This sequence belongs to the glycosyl hydrolase 17 family.

The protein resides in the secreted. It is found in the cell wall. It carries out the reaction Successive hydrolysis of beta-D-glucose units from the non-reducing ends of (1-&gt;3)-beta-D-glucans, releasing alpha-glucose.. Its function is as follows. Glucanases possibly play a role in cell expansion during growth, in cell-cell fusion during mating, and in spore release during sporulation. This enzyme may be involved in beta-glucan degradation and also function biosynthetically as a transglycosylase. The protein is Glucan 1,3-beta-glucosidase (bgl2) of Schizosaccharomyces pombe (strain 972 / ATCC 24843) (Fission yeast).